Reading from the N-terminus, the 286-residue chain is 2-hydroxy-6-oxo-6-phenylhexa-2,4-dienoate hydrolase (286 aa).

Residues 42–43 (GG), Asn51, Asn111, Thr180, and Arg190 contribute to the substrate site. His265 acts as the Proton acceptor in catalysis. Position 266 (Trp266) interacts with substrate.

It belongs to the AB hydrolase superfamily. BphD family. Homodimer.

The catalysed reaction is 2,6-dioxo-6-phenylhexa-3-enoate + H2O = 2-oxopent-4-enoate + benzoate + H(+). The protein operates within xenobiotic degradation; biphenyl degradation; 2-hydroxy-2,4-pentadienoate and benzoate from biphenyl: step 4/4. Functionally, catalyzes an unusual C-C bond hydrolysis of 2-hydroxy-6-oxo-6-phenylhexa-2,4-dienoic acid (HOPDA) to produce benzoic acid and 2-hydroxy-2,4-pentadienoic acid (HPD). The chain is 2-hydroxy-6-oxo-6-phenylhexa-2,4-dienoate hydrolase from Comamonas testosteroni (Pseudomonas testosteroni).